The sequence spans 90 residues: MFKRSVSRLFCAPAPAPAPRKQPGGRIQPIGVNLNQSVKKQLNHLEVLERIKKQRKEQKNNRNQVDPIIAKAYEELEEEGFFDDKNREDY.

The segment at 1-26 is disordered; it reads MFKRSVSRLFCAPAPAPAPRKQPGGR. A coiled-coil region spans residues 33–66; the sequence is NLNQSVKKQLNHLEVLERIKKQRKEQKNNRNQVD.

This is an uncharacterized protein from Dictyostelium discoideum (Social amoeba).